Reading from the N-terminus, the 761-residue chain is Subtilisin-like protease SBT3.15 (761 aa).

The N-terminal stretch at 1–21 is a signal peptide; it reads MENSFLSSKLVFLLAIALVLF. Residues 22–120 constitute a propeptide, activation peptide; sequence LNTELSFLTA…VIPNRILKLK (99 aa). Residues 41 to 119 form the Inhibitor I9 domain; that stretch reads VYIVYLGQRE…HVIPNRILKL (79 aa). The region spanning 134 to 613 is the Peptidase S8 domain; that stretch reads PTSFSSSSSA…GGLVNPEKAA (480 aa). A glycan (N-linked (GlcNAc...) asparagine) is linked at Asn151. Asp164 (charge relay system) is an active-site residue. N-linked (GlcNAc...) asparagine glycosylation is present at Asn197. His241 serves as the catalytic Charge relay system. Residues Asn256 and Asn384 are each glycosylated (N-linked (GlcNAc...) asparagine). Ser544 serves as the catalytic Charge relay system. N-linked (GlcNAc...) asparagine glycosylation is present at Asn636.

This sequence belongs to the peptidase S8 family.

It localises to the secreted. The polypeptide is Subtilisin-like protease SBT3.15 (Arabidopsis thaliana (Mouse-ear cress)).